The primary structure comprises 226 residues: HTH-type transcriptional regulator TcmR (226 aa).

Positions 1–16 (MDSAETDTPSTRSTPN) are enriched in polar residues. Residues 1–25 (MDSAETDTPSTRSTPNGPGLRQRKL) form a disordered region. The HTH tetR-type domain occupies 26 to 86 (RRTRDQLIRE…TPISAIDEAF (61 aa)). The H-T-H motif DNA-binding region spans 49-68 (TVEQIAEAVEVHPRTFFRHF).

It participates in antibiotic biosynthesis; tetracenomycin C biosynthesis. Represses transcription of the divergently oriented tcmR and tcmA (tetracenomycin C resistance and export) genes by binding to an intergenic operator region. This binding is inhibited by tetracenomycin C. This is HTH-type transcriptional regulator TcmR (tcmR) from Streptomyces glaucescens.